We begin with the raw amino-acid sequence, 160 residues long: Ribosomal RNA large subunit methyltransferase H (160 aa).

S-adenosyl-L-methionine is bound by residues L76, G108, and 127–132 (LGKMTW).

The protein belongs to the RNA methyltransferase RlmH family. As to quaternary structure, homodimer.

The protein resides in the cytoplasm. It carries out the reaction pseudouridine(1915) in 23S rRNA + S-adenosyl-L-methionine = N(3)-methylpseudouridine(1915) in 23S rRNA + S-adenosyl-L-homocysteine + H(+). Functionally, specifically methylates the pseudouridine at position 1915 (m3Psi1915) in 23S rRNA. The protein is Ribosomal RNA large subunit methyltransferase H of Sinorhizobium medicae (strain WSM419) (Ensifer medicae).